Consider the following 377-residue polypeptide: Endoplasmic reticulum-Golgi intermediate compartment protein 2 (377 aa).

At Met1–Gly33 the chain is on the cytoplasmic side. A helical transmembrane segment spans residues Gly34–Val54. The Lumenal segment spans residues Tyr55–Cys319. A helical transmembrane segment spans residues Gly320–Val340. Over Glu341–His377 the chain is Cytoplasmic.

This sequence belongs to the ERGIC family. In terms of assembly, may form a heteromeric complex composed of ERGIC1, ERGIC2 and ERGIC3. Interacts with ERGIC3, the interaction is required for the stable expression of both proteins. May interact with EEF1A1.

The protein localises to the endoplasmic reticulum-Golgi intermediate compartment membrane. It localises to the golgi apparatus. Its subcellular location is the cis-Golgi network membrane. It is found in the endoplasmic reticulum membrane. The protein resides in the cytoplasm. The protein localises to the nucleus. Possible role in transport between endoplasmic reticulum and Golgi. In Macaca fascicularis (Crab-eating macaque), this protein is Endoplasmic reticulum-Golgi intermediate compartment protein 2 (ERGIC2).